Reading from the N-terminus, the 59-residue chain is Early growth response protein 1 (59 aa).

C2H2-type zinc fingers lie at residues 1 to 18, 24 to 46, and 52 to 59; these read CDRR…IRIH, FQCR…IRTH, and FACDICGR.

This sequence belongs to the EGR C2H2-type zinc-finger protein family.

It is found in the nucleus. It localises to the cytoplasm. Transcriptional regulator. Recognizes and binds to the DNA sequence 5'-GCG(T/G)GGGCG-3'(EGR-site) in the promoter region of target genes. Binds double-stranded target DNA, irrespective of the cytosine methylation status. Regulates the transcription of numerous target genes, and thereby plays an important role in regulating the response to growth factors, DNA damage, and ischemia. Plays a role in the regulation of cell survival, proliferation and cell death. Mediates responses to ischemia and hypoxia; regulates the expression of proteins that are involved in inflammatory processes. Plays a role in regulating the expression of circadian clock genes. The sequence is that of Early growth response protein 1 (EGR1) from Serinus canaria (Island canary).